A 222-amino-acid chain; its full sequence is Pleckstrin homology domain-containing family B member 2 (222 aa).

A PH domain is found at 2–109 (AFVKSGWLLR…WKFTLQDSRT (108 aa)). Lys20 is a binding site for a 1,2-diacyl-sn-glycero-3-phospho-L-serine.

It is found in the recycling endosome membrane. Its function is as follows. Involved in retrograde transport of recycling endosomes. This chain is Pleckstrin homology domain-containing family B member 2 (PLEKHB2), found in Homo sapiens (Human).